The primary structure comprises 244 residues: MNIDLNADLGEGCASDSELLTLVSSANIACGFHAGDAQTMLTCVREALKNGVAIGAHPSFPDRDNFGRTAMVLPPETVYAQTLYQIGALGAIVQAQGGVMRHVKPHGMLYNQAAKDPHLAQAIAKAVHDYDPSLILVGLAGSELIRAGERHRLVTRQEVFADRGYQADGSLVPRMQPGALIHDEEQALAQTLDMVQAGRVKSVTGVWTTVTAQTVCIHGDGEYALAFARRLRAAFNARNIHVIA.

Belongs to the LamB/PxpA family. Forms a complex composed of PxpA, PxpB and PxpC.

It carries out the reaction 5-oxo-L-proline + ATP + 2 H2O = L-glutamate + ADP + phosphate + H(+). In terms of biological role, catalyzes the cleavage of 5-oxoproline to form L-glutamate coupled to the hydrolysis of ATP to ADP and inorganic phosphate. The polypeptide is 5-oxoprolinase subunit A (Salmonella typhimurium (strain LT2 / SGSC1412 / ATCC 700720)).